The primary structure comprises 547 residues: Delta-guaiene synthase 2 (547 aa).

Residues Asp299, Asp303, and Asp444 each coordinate Mg(2+). A DDXXD motif motif is present at residues 299–303; that stretch reads DDTYD.

This sequence belongs to the terpene synthase family. Mg(2+) is required as a cofactor.

The enzyme catalyses (2E,6E)-farnesyl diphosphate = delta-guaiene + diphosphate. It catalyses the reaction (2E,6E)-farnesyl diphosphate = alpha-guaiene + diphosphate. Its pathway is secondary metabolite biosynthesis; terpenoid biosynthesis. Its function is as follows. Sesquiterpene synthase involved in the biosynthesis of delta-guaiene (53.7%) and alpha-guaiene (44.6%), two structures composed of five- and seven-membered rings. Also produces 1.7% of alpha-humulene. This chain is Delta-guaiene synthase 2 (C3), found in Aquilaria crassna (Eagle wood).